A 135-amino-acid polypeptide reads, in one-letter code: Protein PsiE homolog (135 aa).

A run of 4 helical transmembrane segments spans residues 14–34 (LQTI…IFLV), 54–74 (YQLI…ALIV), 82–102 (HFPL…LIIV), and 107–127 (PSDT…LYLA).

Belongs to the PsiE family.

The protein localises to the cell inner membrane. The protein is Protein PsiE homolog of Pectobacterium atrosepticum (strain SCRI 1043 / ATCC BAA-672) (Erwinia carotovora subsp. atroseptica).